The sequence spans 220 residues: Deoxyribose-phosphate aldolase 1 (220 aa).

Residue aspartate 89 is the Proton donor/acceptor of the active site. Lysine 151 acts as the Schiff-base intermediate with acetaldehyde in catalysis. The active-site Proton donor/acceptor is the lysine 180.

Belongs to the DeoC/FbaB aldolase family. DeoC type 1 subfamily.

It localises to the cytoplasm. It catalyses the reaction 2-deoxy-D-ribose 5-phosphate = D-glyceraldehyde 3-phosphate + acetaldehyde. The protein operates within carbohydrate degradation; 2-deoxy-D-ribose 1-phosphate degradation; D-glyceraldehyde 3-phosphate and acetaldehyde from 2-deoxy-alpha-D-ribose 1-phosphate: step 2/2. Catalyzes a reversible aldol reaction between acetaldehyde and D-glyceraldehyde 3-phosphate to generate 2-deoxy-D-ribose 5-phosphate. The protein is Deoxyribose-phosphate aldolase 1 of Staphylococcus aureus (strain bovine RF122 / ET3-1).